Consider the following 201-residue polypeptide: Recombination protein RecR (201 aa).

The C4-type zinc finger occupies 58-73; that stretch reads CEQCASITDTCPCRIC. The Toprim domain maps to 81 to 178; that stretch reads DKLCLVSEWD…ELSRLAQGIP (98 aa).

It belongs to the RecR family.

May play a role in DNA repair. It seems to be involved in an RecBC-independent recombinational process of DNA repair. It may act with RecF and RecO. This chain is Recombination protein RecR, found in Maridesulfovibrio salexigens (strain ATCC 14822 / DSM 2638 / NCIMB 8403 / VKM B-1763) (Desulfovibrio salexigens).